The chain runs to 206 residues: AT-hook motif nuclear-localized protein 28 (206 aa).

Disordered regions lie at residues M1 to P21 and T160 to Y206. Positions G5–K17 form a DNA-binding region, a.T hook. Over residues P7 to P18 the composition is skewed to basic residues. The 147-residue stretch at D27 to E173 folds into the PPC domain.

The protein localises to the nucleus. Functionally, transcription factor that specifically binds AT-rich DNA sequences related to the nuclear matrix attachment regions (MARs). This Arabidopsis thaliana (Mouse-ear cress) protein is AT-hook motif nuclear-localized protein 28.